Reading from the N-terminus, the 359-residue chain is Phosphate acyltransferase (359 aa).

This sequence belongs to the PlsX family. In terms of assembly, homodimer. Probably interacts with PlsY.

It localises to the cytoplasm. The enzyme catalyses a fatty acyl-[ACP] + phosphate = an acyl phosphate + holo-[ACP]. It participates in lipid metabolism; phospholipid metabolism. Functionally, catalyzes the reversible formation of acyl-phosphate (acyl-PO(4)) from acyl-[acyl-carrier-protein] (acyl-ACP). This enzyme utilizes acyl-ACP as fatty acyl donor, but not acyl-CoA. This is Phosphate acyltransferase from Salmonella heidelberg (strain SL476).